A 162-amino-acid chain; its full sequence is Phosphopantetheine adenylyltransferase (162 aa).

Substrate is bound at residue Thr9. Residues 9-10 and His17 each bind ATP; that span reads TF. Residues Lys41, Leu77, and Arg91 each coordinate substrate. Residues 92–94, Glu102, and 127–133 each bind ATP; these read GLR and RQAIASK.

The protein belongs to the bacterial CoaD family. As to quaternary structure, homohexamer. The cofactor is Mg(2+).

Its subcellular location is the cytoplasm. It catalyses the reaction (R)-4'-phosphopantetheine + ATP + H(+) = 3'-dephospho-CoA + diphosphate. It functions in the pathway cofactor biosynthesis; coenzyme A biosynthesis; CoA from (R)-pantothenate: step 4/5. Functionally, reversibly transfers an adenylyl group from ATP to 4'-phosphopantetheine, yielding dephospho-CoA (dPCoA) and pyrophosphate. This is Phosphopantetheine adenylyltransferase from Cereibacter sphaeroides (strain ATCC 17025 / ATH 2.4.3) (Rhodobacter sphaeroides).